The chain runs to 296 residues: Phosphate transport system permease protein PstA (296 aa).

The Cytoplasmic segment spans residues Met1–Arg28. The chain crosses the membrane as a helical span at residues Ile29 to Met50. Topologically, residues Ser51–Ala82 are periplasmic. The chain crosses the membrane as a helical span at residues Leu83–Ile102. Residues Leu83 to Ala286 enclose the ABC transmembrane type-1 domain. The Cytoplasmic segment spans residues Met103 to Asp126. A helical transmembrane segment spans residues Ile127–Ala146. Over Gln147–His150 the chain is Periplasmic. Residues Phe151 to Ile169 traverse the membrane as a helical segment. Residues Arg170 to Lys204 lie on the Cytoplasmic side of the membrane. The chain crosses the membrane as a helical span at residues Ala205–Gly223. Topologically, residues Glu224–Gln266 are periplasmic. A helical transmembrane segment spans residues Leu267–Ala286. The Cytoplasmic portion of the chain corresponds to Arg287–Gly296.

It belongs to the binding-protein-dependent transport system permease family. CysTW subfamily.

The protein localises to the cell inner membrane. Functionally, part of the binding-protein-dependent transport system for phosphate; probably responsible for the translocation of the substrate across the membrane. The polypeptide is Phosphate transport system permease protein PstA (pstA) (Escherichia coli (strain K12)).